The sequence spans 282 residues: 5'-adenylylsulfate reductase-like 2 (282 aa).

A signal peptide spans 1-19 (MRWWPALPLLLLAVAVAGA). One can recognise a Thioredoxin domain in the interval 20–159 (GDAAPVCTRP…LAAFYNDVSG (140 aa)). Asparagine 134 carries an N-linked (GlcNAc...) asparagine glycan. The helical transmembrane segment at 205-225 (AASFVILRLLYLFYPKITAFV) threads the bilayer.

It is found in the membrane. In Oryza sativa subsp. japonica (Rice), this protein is 5'-adenylylsulfate reductase-like 2 (APRL2).